Reading from the N-terminus, the 339-residue chain is 4-hydroxy-2-oxovalerate aldolase 3 (339 aa).

The region spanning 7 to 259 (IRVTDTSLRD…KTGIDFFAIA (253 aa)) is the Pyruvate carboxyltransferase domain. Residue 15 to 16 (RD) participates in substrate binding. A Mn(2+)-binding site is contributed by Asp16. The active-site Proton acceptor is the His19. Positions 169 and 198 each coordinate substrate. Positions 198 and 200 each coordinate Mn(2+). Residue Tyr289 coordinates substrate.

It belongs to the 4-hydroxy-2-oxovalerate aldolase family.

The catalysed reaction is (S)-4-hydroxy-2-oxopentanoate = acetaldehyde + pyruvate. The sequence is that of 4-hydroxy-2-oxovalerate aldolase 3 (hsaF) from Rhodococcus jostii (strain RHA1).